The following is a 599-amino-acid chain: Protein ECM25 (599 aa).

One can recognise a Rho-GAP domain in the interval 181–359 (NRLTPLAIRQ…NLLDFFPEIA (179 aa)). Disordered stretches follow at residues 362–447 (ISSP…PLPI), 468–495 (ASSSTDTLSSPTKTPSADSLPLSNSSTD), and 543–563 (ELQEKKKKNETTSKTADKFSQ). 3 stretches are compositionally biased toward low complexity: residues 363–373 (SSPPSSVSSSS), 396–413 (TLPRSRSPSPQRSVTSPT), and 468–483 (ASSSTDTLSSPTKTPS). A compositionally biased stretch (basic and acidic residues) spans 543–562 (ELQEKKKKNETTSKTADKFS).

The protein resides in the cytoplasm. Functionally, may be involved in cell wall organization and biogenesis. This Saccharomyces cerevisiae (strain ATCC 204508 / S288c) (Baker's yeast) protein is Protein ECM25 (ECM25).